The primary structure comprises 550 residues: CTP synthase (550 aa).

The tract at residues 1-277 is amidoligase domain; the sequence is MNGSADAGPR…GRAVERALGL (277 aa). Serine 23 is a binding site for CTP. Residue serine 23 coordinates UTP. 24–29 is an ATP binding site; sequence SLGKGI. Tyrosine 64 serves as a coordination point for L-glutamine. Position 81 (aspartate 81) interacts with ATP. Mg(2+) is bound by residues aspartate 81 and glutamate 151. CTP-binding positions include 158–160, 198–203, and lysine 234; these read DIE and KTKPTQ. UTP is bound by residues 198–203 and lysine 234; that span reads KTKPTQ. Valine 252 provides a ligand contact to ATP. The Glutamine amidotransferase type-1 domain occupies 302–549; sequence KIAIAGKYVK…VEAALAYQER (248 aa). Position 364 (glycine 364) interacts with L-glutamine. Cysteine 391 serves as the catalytic Nucleophile; for glutamine hydrolysis. Residues 392–395, glutamate 415, and arginine 472 contribute to the L-glutamine site; that span reads LGLQ. Active-site residues include histidine 522 and glutamate 524.

The protein belongs to the CTP synthase family. As to quaternary structure, homotetramer in the presence of UTP and ATP. Is in a protein concentration-dependent equilibrium between monomer, dimer, and tetramer in the absence of UTP and ATP.

The catalysed reaction is UTP + L-glutamine + ATP + H2O = CTP + L-glutamate + ADP + phosphate + 2 H(+). The enzyme catalyses L-glutamine + H2O = L-glutamate + NH4(+). It catalyses the reaction UTP + NH4(+) + ATP = CTP + ADP + phosphate + 2 H(+). Its pathway is pyrimidine metabolism; CTP biosynthesis via de novo pathway; CTP from UDP: step 2/2. Allosterically activated by GTP, when glutamine is the substrate. GTP has no effect on the reaction when ammonia is the substrate. The allosteric effector GTP functions by stabilizing the protein conformation that binds the tetrahedral intermediate(s) formed during glutamine hydrolysis. Inhibited by the product CTP, via allosteric rather than competitive inhibition. In terms of biological role, catalyzes the ATP-dependent amination of UTP to CTP with either L-glutamine or ammonia as the source of nitrogen. Regulates intracellular CTP levels through interactions with the four ribonucleotide triphosphates. The sequence is that of CTP synthase from Thermus thermophilus (strain ATCC 27634 / DSM 579 / HB8).